The primary structure comprises 956 residues: Probable hypoxanthine oxidase XdhD (956 aa).

Mo-molybdopterin contacts are provided by glutamine 414, phenylalanine 445, and alanine 727.

It belongs to the xanthine dehydrogenase family. [2Fe-2S] cluster serves as cofactor. Mo-molybdopterin is required as a cofactor.

Probably has no xanthine dehydrogenase activity; however deletion results in increased adenine sensitivity, suggesting that this protein contributes to the conversion of adenine to guanine nucleotides during purine salvage. In Escherichia coli O157:H7, this protein is Probable hypoxanthine oxidase XdhD (xdhD).